A 249-amino-acid chain; its full sequence is Type III pantothenate kinase (249 aa).

ATP is bound at residue 6 to 13 (DCGNSFIK). Residues Y93 and 100–103 (GLDR) each bind substrate. D102 (proton acceptor) is an active-site residue. D122 provides a ligand contact to K(+). T125 is an ATP binding site. T181 serves as a coordination point for substrate.

It belongs to the type III pantothenate kinase family. In terms of assembly, homodimer. NH4(+) serves as cofactor. The cofactor is K(+).

Its subcellular location is the cytoplasm. The catalysed reaction is (R)-pantothenate + ATP = (R)-4'-phosphopantothenate + ADP + H(+). Its pathway is cofactor biosynthesis; coenzyme A biosynthesis; CoA from (R)-pantothenate: step 1/5. Catalyzes the phosphorylation of pantothenate (Pan), the first step in CoA biosynthesis. This chain is Type III pantothenate kinase, found in Pseudomonas savastanoi pv. phaseolicola (strain 1448A / Race 6) (Pseudomonas syringae pv. phaseolicola (strain 1448A / Race 6)).